Reading from the N-terminus, the 251-residue chain is Hydroxyacylglutathione hydrolase (251 aa).

His53, His55, Asp57, His58, His110, Asp127, and His165 together coordinate Zn(2+).

Belongs to the metallo-beta-lactamase superfamily. Glyoxalase II family. As to quaternary structure, monomer. It depends on Zn(2+) as a cofactor.

It carries out the reaction an S-(2-hydroxyacyl)glutathione + H2O = a 2-hydroxy carboxylate + glutathione + H(+). The protein operates within secondary metabolite metabolism; methylglyoxal degradation; (R)-lactate from methylglyoxal: step 2/2. In terms of biological role, thiolesterase that catalyzes the hydrolysis of S-D-lactoyl-glutathione to form glutathione and D-lactic acid. The polypeptide is Hydroxyacylglutathione hydrolase (Serratia proteamaculans (strain 568)).